A 356-amino-acid chain; its full sequence is Nucleotide-binding protein GDI1189/Gdia_1902 (356 aa).

An ATP-binding site is contributed by 20–27; it reads GLSGAGKS. 65-68 is a binding site for GTP; the sequence is DSRT. Residues 285–313 form a disordered region; that stretch reads EPGGTCDSPGKPAHIEKGAAPTDVQSGGA.

This sequence belongs to the RapZ-like family.

Functionally, displays ATPase and GTPase activities. The protein is Nucleotide-binding protein GDI1189/Gdia_1902 of Gluconacetobacter diazotrophicus (strain ATCC 49037 / DSM 5601 / CCUG 37298 / CIP 103539 / LMG 7603 / PAl5).